Reading from the N-terminus, the 1503-residue chain is E3 ubiquitin-protein ligase listerin (1503 aa).

14 HEAT repeats span residues 52 to 89 (SGIDDETRIVMRKLTKKDCQTREKGLRELTNIIAETSS), 93 to 129 (CYEHFCGLVPQLSTDGSPTVRLLTMKTITLFLVKLEK), 133 to 170 (KGLKKIIPMVLFARCDVTNGVAAAAGAVIRDGFEADKK), 280 to 318 (LNTPSIVTYIQNHLDSQTFTPECSTAWEGMIILLPSAQF), 323 to 345 (SLQNGIYPRFLNVIRKKGNHWRV), 346 to 384 (LQHFLLPAVVLLLKEMGSLENNMKVLGTIMESFTDNLPW), 552 to 589 (GDIVRLIKLLLENQEIKSLNISVKNDHVGRRLLLTGGS), 640 to 663 (AENVEFLITLLRKMKSTDVSNEAE), 664 to 700 (KNVLILKLFTAIFESDEDAKSEHYNCLSEHLTSDFNS), 845 to 882 (LEKRYSLVALTEELQRSRREIEERLIRSDEVRFKLDDS), 1022 to 1065 (TLFI…RMFR), 1078 to 1117 (RTLLKAMFTLVEFPTNVPNDSVVTREFVPELSVFKYSLLE), 1141 to 1183 (AAAK…VMIS), and 1302 to 1340 (FKSITLLPAAVRLFHKNIPNNFKPIFQEVVTKHASKLLI). The RING-type zinc-finger motif lies at 1446-1499 (CTICMMTVHQQTNQLPKVKCKQCKNRFHSNCLVSSFHTYKWFESSNQSTCPLCR).

This sequence belongs to the LTN1 family. In terms of assembly, component of the ribosome quality control complex (RQC), composed of at least the E3 ubiquitin ligase ltn1 and nemf. The complex probably also contains tcf25 as well as vcp/p97 and its ubiquitin-binding cofactors. RQC forms a stable complex with 60S ribosomal subunits.

It is found in the cytoplasm. It localises to the cytosol. The enzyme catalyses S-ubiquitinyl-[E2 ubiquitin-conjugating enzyme]-L-cysteine + [acceptor protein]-L-lysine = [E2 ubiquitin-conjugating enzyme]-L-cysteine + N(6)-ubiquitinyl-[acceptor protein]-L-lysine.. Its pathway is protein modification; protein ubiquitination. In terms of biological role, E3 ubiquitin-protein ligase. Component of the ribosome quality control complex (RQC), a ribosome-associated complex that mediates ubiquitination and extraction of incompletely synthesized nascent chains for proteasomal degradation. Ubiquitination leads to vcp/p97 recruitment for extraction and degradation of the incomplete translation product. This chain is E3 ubiquitin-protein ligase listerin, found in Caenorhabditis briggsae.